Reading from the N-terminus, the 628-residue chain is Phomenoic acid biosynthesis cluster MFS-type transporter (628 aa).

Helical transmembrane passes span 102–122, 150–170, 174–194, 204–224, 232–252, 262–282, 302–322, 329–349, 375–395, 407–427, 435–455, 488–508, 524–544, and 595–615; these read IHGFPWFLLVISVLSSIFLYA, VGFVIGGVAVIMPLGKLYGIL, WLYITSVVLFMAASAVCGAAP, VFAGAGGIGMYIGTMILLSIN, AYLSLVGLVWGIGTVLGPVIG, WAFYLNLVIGALLFPVWFFLL, FVGAILSIGAFVTTIMPINFG, NSGTIIALFVVSGVLWIAFAV, MLLFICAAAINSAVFVPIYFI, ALDSAIRLLPLIFLLCATILV, FGYYMPWYLVGGVFCLIANVF, GFEALLGLGAGGSVQAGYAVI, IMIAQIGGIALGLACASAVFI, and AKAFIVAYAGAAVSLVASLGF.

The protein belongs to the major facilitator superfamily. TCR/Tet family.

It localises to the cell membrane. MFS-type transporter; part of the gene cluster that mediates the biosynthesis of phomenoic acid, a long chain aliphatic carboxylic acid that does not appear to be essential for pathogenicity but may play a role in allowing to outcompete other fungi in the environmental niche via its antifungal properties. Is probably involved in the efflux of phomenoic acid. This Leptosphaeria maculans (strain JN3 / isolate v23.1.3 / race Av1-4-5-6-7-8) (Blackleg fungus) protein is Phomenoic acid biosynthesis cluster MFS-type transporter.